The chain runs to 589 residues: Phenylalanine--tRNA ligase beta subunit (589 aa).

Positions 290–368 constitute a B5 domain; the sequence is LNPTCFKADI…IAYGYDNLKH (79 aa). Mg(2+) contacts are provided by aspartate 346, aspartate 352, glutamate 355, and aspartate 356.

The protein belongs to the phenylalanyl-tRNA synthetase beta subunit family. Type 2 subfamily. Tetramer of two alpha and two beta subunits. Mg(2+) is required as a cofactor.

The protein resides in the cytoplasm. It is found in the nucleus. The enzyme catalyses tRNA(Phe) + L-phenylalanine + ATP = L-phenylalanyl-tRNA(Phe) + AMP + diphosphate + H(+). The chain is Phenylalanine--tRNA ligase beta subunit (frs1) from Schizosaccharomyces pombe (strain 972 / ATCC 24843) (Fission yeast).